Consider the following 188-residue polypeptide: Phospholipase A2 inhibitor 31 kDa subunit (188 aa).

Cystine bridges form between Cys-3–Cys-27, Cys-6–Cys-13, Cys-20–Cys-48, Cys-54–Cys-75, Cys-76–Cys-81, Cys-99–Cys-124, Cys-117–Cys-146, and Cys-150–Cys-172. Residue Asn-157 is glycosylated (N-linked (GlcNAc...) asparagine).

The protein belongs to the CNF-like-inhibitor family. As to quaternary structure, heterodimer with phospholipase A2 inhibitor 25 kDa. In terms of processing, N-glycosylated. In terms of tissue distribution, expressed by the liver.

The protein resides in the secreted. Its function is as follows. Inhibits the enzymatic activity of phospholipase A2. The chain is Phospholipase A2 inhibitor 31 kDa subunit from Naja kaouthia (Monocled cobra).